Consider the following 204-residue polypeptide: Glycerol-3-phosphate acyltransferase (204 aa).

Helical transmembrane passes span 8 to 28 (MLVFAYLLGSINSAIIVCYIF), 53 to 73 (VPAIITLAFDILKGLVPVVLA), 81 to 101 (FITACTALYAILGHIFPIFFG), 116 to 136 (FGFSWILGLIFVVTWLCVAVI), and 155 to 175 (VIFTSDLQVATPFLIIAIIIL).

The protein belongs to the PlsY family. Probably interacts with PlsX.

Its subcellular location is the cell inner membrane. It carries out the reaction an acyl phosphate + sn-glycerol 3-phosphate = a 1-acyl-sn-glycero-3-phosphate + phosphate. It participates in lipid metabolism; phospholipid metabolism. Catalyzes the transfer of an acyl group from acyl-phosphate (acyl-PO(4)) to glycerol-3-phosphate (G3P) to form lysophosphatidic acid (LPA). This enzyme utilizes acyl-phosphate as fatty acyl donor, but not acyl-CoA or acyl-ACP. The protein is Glycerol-3-phosphate acyltransferase of Francisella philomiragia subsp. philomiragia (strain ATCC 25017 / CCUG 19701 / FSC 153 / O#319-036).